The following is a 208-amino-acid chain: Non-specific lipid transfer protein GPI-anchored 4 (208 aa).

Positions 1 to 25 are cleaved as a signal peptide; sequence MKQSLLLSFVLLLLSSSSLVTPIHA. 3 N-linked (GlcNAc...) asparagine glycosylation sites follow: asparagine 27, asparagine 67, and asparagine 105. 4 cysteine pairs are disulfide-bonded: cysteine 48–cysteine 91, cysteine 58–cysteine 75, cysteine 76–cysteine 116, and cysteine 89–cysteine 125. Positions 136-181 are disordered; sequence GASPVSPSAGAPTTSPSAAKSPETSATSPSSDETPSMTAPSPSSSG. The GPI-anchor amidated serine moiety is linked to residue serine 179. The propeptide at 180 to 208 is removed in mature form; that stretch reads SGTNILSVPALTIVFVIVSSVAYISAFSN.

The protein belongs to the plant LTP family. As to expression, confined to the anthers and stamen of the inflorescence, especially in pollen.

It is found in the cell membrane. Its function is as follows. Lipid transfer protein involved in seed and ovule maturation and development, probably by regulating the fatty acids homeostasis during suberin and sporopollenin biosynthesis or deposition. This Arabidopsis thaliana (Mouse-ear cress) protein is Non-specific lipid transfer protein GPI-anchored 4.